The sequence spans 514 residues: Major facilitator superfamily domain-containing protein 4A (514 aa).

Transmembrane regions (helical) follow at residues 19–39 (LTYWSVFFSFGLCIAFLGPTL), 53–73 (ISWVFLSQQLCLLLGSALGGV), 82–102 (LWALFTSSLAISLVFAVIPFC), 107–127 (VLALVMALAGLAMGCIDTVAN), and 139–159 (AVFLQVLHFFVGFGALLSPLI). Residues N177 and N203 are each glycosylated (N-linked (GlcNAc...) asparagine). 7 helical membrane passes run 221 to 241 (YAFWIMALINLPVPMAVLMLL), 307 to 327 (FFAIHITAALVLFMTDGLTGA), 347 to 367 (VAGYLPSLFWGFITLGRLLSI), 376 to 396 (ATMVFINVVGVVVTFLVLLIF), 400 to 420 (VVFLFVGTASLGLFLSSTFPS), 438 to 458 (VLVTGAGVGEMVLQMLVGSIF), and 466 to 486 (FLVCGVIFGCLAFTFYILLLF).

Belongs to the major facilitator superfamily.

It localises to the membrane. The protein is Major facilitator superfamily domain-containing protein 4A (MFSD4A) of Pongo abelii (Sumatran orangutan).